A 208-amino-acid chain; its full sequence is Holliday junction branch migration complex subunit RuvA (208 aa).

Residues Met-1–Arg-64 are domain I. Residues Val-65–Ile-143 are domain II. The flexible linker stretch occupies residues Ala-144–Arg-152. Positions Thr-153–Arg-208 are domain III.

The protein belongs to the RuvA family. In terms of assembly, homotetramer. Forms an RuvA(8)-RuvB(12)-Holliday junction (HJ) complex. HJ DNA is sandwiched between 2 RuvA tetramers; dsDNA enters through RuvA and exits via RuvB. An RuvB hexamer assembles on each DNA strand where it exits the tetramer. Each RuvB hexamer is contacted by two RuvA subunits (via domain III) on 2 adjacent RuvB subunits; this complex drives branch migration. In the full resolvosome a probable DNA-RuvA(4)-RuvB(12)-RuvC(2) complex forms which resolves the HJ.

The protein resides in the cytoplasm. Functionally, the RuvA-RuvB-RuvC complex processes Holliday junction (HJ) DNA during genetic recombination and DNA repair, while the RuvA-RuvB complex plays an important role in the rescue of blocked DNA replication forks via replication fork reversal (RFR). RuvA specifically binds to HJ cruciform DNA, conferring on it an open structure. The RuvB hexamer acts as an ATP-dependent pump, pulling dsDNA into and through the RuvAB complex. HJ branch migration allows RuvC to scan DNA until it finds its consensus sequence, where it cleaves and resolves the cruciform DNA. This Methylorubrum extorquens (strain CM4 / NCIMB 13688) (Methylobacterium extorquens) protein is Holliday junction branch migration complex subunit RuvA.